Reading from the N-terminus, the 492-residue chain is Putative cytochrome P450 136 (492 aa).

Cys-439 contacts heme.

It belongs to the cytochrome P450 family. Heme is required as a cofactor.

The polypeptide is Putative cytochrome P450 136 (cyp136) (Mycobacterium tuberculosis (strain CDC 1551 / Oshkosh)).